Consider the following 305-residue polypeptide: Olfactory receptor 4F17 (305 aa).

The Extracellular segment spans residues 1-18; it reads MVTEFIFLGLSDSQGLQT. A helical transmembrane segment spans residues 19-42; that stretch reads FLFMLFFVFYGGIVFGNLLIVITV. Residues 43 to 50 are Cytoplasmic-facing; it reads VSDSHLHS. The chain crosses the membrane as a helical span at residues 51–72; sequence PMYFLLANLSLIDLSLSSVTAP. At 73–93 the chain is on the extracellular side; the sequence is KMITDFFSQRKVISFKGCLVQ. Residues cysteine 90 and cysteine 182 are joined by a disulfide bond. Residues 94 to 113 traverse the membrane as a helical segment; it reads IFLLHFFGGSEMVILIAMGF. Residues 114-132 lie on the Cytoplasmic side of the membrane; the sequence is DRYIAICKPLHYTTIMCGN. A helical membrane pass occupies residues 133–151; it reads ACVGIMAVAWGIGFLHSVS. The Extracellular segment spans residues 152–188; it reads QLAFAVHLPFCGPNEVDSFYCDLPRVIKLACTDTYRL. Residues 189-212 form a helical membrane-spanning segment; the sequence is DIMVIANSGVLTVCSFVLLIISYT. Residues 213-228 are Cytoplasmic-facing; the sequence is IILMTIQHRPLDKSSK. The helical transmembrane segment at 229–251 threads the bilayer; sequence ALSTLTAHITVVLLFFGPCVFIY. Topologically, residues 252–262 are extracellular; the sequence is AWPFPIKSLDK. Residues 263-282 form a helical membrane-spanning segment; sequence FLAVFYSVITPLLNPIIYTL. Residues 283–305 lie on the Cytoplasmic side of the membrane; sequence RNKDMKTAIRQLRKWDAHSSVKF.

Belongs to the G-protein coupled receptor 1 family.

The protein localises to the cell membrane. In terms of biological role, odorant receptor. This Homo sapiens (Human) protein is Olfactory receptor 4F17 (OR4F17).